The sequence spans 29 residues: Cytochrome b6-f complex subunit 8 (29 aa).

A helical transmembrane segment spans residues 3–23 (IVSLAWAALMVVFSFSLSLVV).

The protein belongs to the PetN family. In terms of assembly, the 4 large subunits of the cytochrome b6-f complex are cytochrome b6, subunit IV (17 kDa polypeptide, PetD), cytochrome f and the Rieske protein, while the 4 small subunits are PetG, PetL, PetM and PetN. The complex functions as a dimer.

The protein resides in the plastid. The protein localises to the chloroplast thylakoid membrane. Functionally, component of the cytochrome b6-f complex, which mediates electron transfer between photosystem II (PSII) and photosystem I (PSI), cyclic electron flow around PSI, and state transitions. This chain is Cytochrome b6-f complex subunit 8, found in Glycine max (Soybean).